The primary structure comprises 146 residues: Large ribosomal subunit protein uL15 (146 aa).

Residues Met-1–Pro-56 are disordered. Composition is skewed to gly residues over residues Arg-21–Gln-35 and Ser-42–Gly-52.

This sequence belongs to the universal ribosomal protein uL15 family. Part of the 50S ribosomal subunit.

In terms of biological role, binds to the 23S rRNA. The polypeptide is Large ribosomal subunit protein uL15 (Clostridium botulinum (strain Langeland / NCTC 10281 / Type F)).